The sequence spans 3010 residues: MIESTSNKSRDVAVIGIGLRLPGGSNTPLELWNNLIKGIDGIVETKERWSDTFSEMGEVSSKYAGLIDFDQWMSFDPLHFAINPSDAKEIDPQQKILLKTTWEAFEDAQIDPLSLRGSDTSVYVGASSMDYASINTDPNKQPINCFNVNLSGVSNRISYCYDLRGTSLTIDTACSSSLNAVHLGYESIVNGKSDYSIVGGVNFIINPQQSRAFKYAMVTSKTGKCKAFDESADGFVRSEGAVVLILKSLSKSIEDGNQIYSIIKGSSSNVDGTLNKTNYFAPSKVSQSNNMQKAFDSTNGELTPNDISFFELHGTGTQIGDPIEVEAVSTLFKDIKTKESPLLIGSIKSNIGHLEPASGVASLAKVCLMLKNREFVKNIHFETPNPNIKFDEWKVKVCTQNTPFPTIRGKPISIAINSFGITGSNACLLLSEYLKTNITTTNDQLEPSTTSYLIPLSSSSKKSLELYKNELTNNIETFSKSIEFKDFISYHINSKAIKLASRSVLMVKDWDELKSSLNLNEPLIYSSKGNKSGNIMKDNNKNPILVFVFCGIGGQWNQMGKQLYETSKVFKQSIDEIDQIFNRLFGYSILKKLRSISDDDSKGINEFITSQPSIFMLQVSLFEFYKSWGINPSINVGHSFGEISSACCSGMLDLETACFIVYKRSIIQTKTIGSGGMLVIGLSEDEYKKQYQSQYPLIEISCFNSPSSIVISGSELDLTTITSSLKEKNIFTYLLGSPAALHSSKQKVIKDDILTQLKDIKFKQPTIKTFSTVTTNLFDNSTTPFDSNYIFSNIRKPVSFEKTIKNIFNHIETNDLGSNVIFLELSPLPTLTNYIKEMIPQNSNYFYIDDESITILTSLNKKKSIDELQEIKSTISQIYCSGYNVNFKSQLTTTTTTTFGNLIIDSNKIVKGFTSYYLPRYQWDESNYFKVGRISKQISQGPTATQLGYRNDVSPFMSYTSYIDIKEEPFKFLKCHQSRGRNLFPGNAYLENVLKVFPDQDLTFHLIEYRSPLILKEGIKHIISTNIYPSAKNEYRVTFHYKDSFDKWILGCSARFSVLKHNSDLENQKIDVESLKAKCNWTTIKRKEFYEVLKTNTSLALTGQFQCIEEAYYGYNCCLAKISMNETLTKLSQYDNELFLNACTIDGGFQLLGLFRDNPDTFVMDRVELLRFYASNIPKSSKFRENYPFIYTYTEFISQIGNSVYANINTFLPDGTLLFNTPVVCYSSISTDIKNQLSIENPNHQLYSTVLQSLESPLSVTTQNAIIDEKLFLSFLPTPVANIRKAFTTCIFSNIKKIYQSITPAKINTSTVDSLIDSYFKICETDNIEKRKLGETLFNALKLNYSIIEYSSQAKLIKLLSTNQIEIMNKITTHLLNETKPTTNTTETTPVSSSQKLPEQIQLIENIITKSVLPLVNEKIVFRILEISSGIGQLSKIIVTRLNELLQQNPLAEIDIELTFTDREDITLIKEKLTTLLYSTSSTADINSKDLSSRKTSLIFTQLDLNDKDLISSKTIYPSYYDIIVLNGLDGIKDLNQSIETIYQILNPNGYFIMIDTLFKANKSDLKNYELYQQWLSFNYFDSTKDLDSWKKLLTQDFKLINFTATSSQPWVILCQKPRFFETVSTENPISTTLSCYDQVIIFGTIDNINESKALSKLMDVNDRGTDIYCIKTLDEFETHVKETPLTDESVIVYVNTINQVFISFISYSLEYIKINQHLLRTNCNAKHVLLTRSAFIETTNTLVSATVGAFRYFCEFSQLDLYLMDFDDSIYLKSMQFINVTHEMTNPNKHYQREFIFRGDKVYYERVTQETNLKLKLKSTSYISEPTQLYAKLGQNLQYQLKPFENKIPEGFIEVKVLASGINFKDNLVYRRLVPNEAVNHTGNSNDPEFGYECSGIVSRVGDGVTKFKVGDEVVGLGFNCTGSFVTLEQFRFVLKPKNLTHVEAASIPVVYLTSYYSLFVAGYLSIEKKESVLIHGGTGGIGLACINLLKAKGFKGYLFVTVGSKEKENFLRVTYGNFITGIYSSQNTDYLLEIKKKIQQLTGNNLIFKQFGVAKMGIDLIINTLSNEFMDANFNSLCQGGRIIDLSVTHMNSQDTTDFRKFRYCISYSSVELLLNGFERNKLILQEVMDMFVNENLALLPIKEYSVKDIKEAIEFIAERKHIGKIVVNHENYDLISQTLVSNDNEFYKDFLIPKANYRISADCNLGKTVLLTGQLGLSLSIIKWIIAFNNLEQPVENILVLSLSPIKYELEHMICYCKHVNNQIKIIFKQVDISDMCALDDAIGEIYKENENLPLVSSIFHNAFAPSECDALDIDEDHLRISHSAKTMGMINLNSLSTGIWSESIKNFVLSSSITSILGSQRQCGYISANCIIDAVSRLRASEGLPCTSINWGVLGTGFVSRNESVSKLFEYQGFIPISMDMLIGTLDLFLQNSGKLNNKIVASFNYNNVSAAFRNHHLSYKLNYFLNPVYSKGSTFDDNELSIRDDILEKFSEYLSTEKSKLSLDIKLIDYGSSSIMLVELKNYLDKTYTPNILSIAQLQNVTINQLIQAVIQAVSKLKKPTTNQQSQQPIISNIKWEDEIALDPTIKPTQQIIDTYKNEMTQLYKNNNNKTSLGGLQVLLTGPCTFSGTHILSNLLLSSKTKVIHCLLPMETPEQVMCTIIDNFKAQGLYDQLNLANVLSKIKPIAADFTRPIFGLDTDDYIELSKKIDIVINAASNTTKHYCAHISYEDTNKEYLHGVSHLLRFASSEKLKRVVQISTLGRYSDLQRNSLDEYYFPEVDFSFISDQNQLVSGYIQSKIVAEYHLKQASNRGIPCLIVRTPFTFPGNNGIGREADFTQLLLQSCYTLNCYPTESHIQLYTAPVTWYAKNITLMAVGSDISQDGCWDTINTSPIENLLCFNLFGGGFDFGDLLVDISKDLSWKEVPFETLVKKAAVNETECCKRLASFVLKKKGDFLKNLGVIPGNFTVNENLKNYLTLNNSFDGWLVTKQLVYNHLSYVFKKKVF.

Residues 9–432 (SRDVAVIGIG…GSNACLLLSE (424 aa)) form the Ketosynthase family 3 (KS3) domain. Catalysis depends on for beta-ketoacyl synthase activity residues Cys-174, His-313, and His-353. The segment at 629-662 (GINPSINVGHSFGEISSACCSGMLDLETACFIVY) is acyl/malonyl transferase. Ser-639 (for acyl/malonyl transferase activity) is an active-site residue. The interval 944–1063 (ATQLGYRNDV…ARFSVLKHNS (120 aa)) is N-terminal hotdog fold. The 292-residue stretch at 944–1235 (ATQLGYRNDV…YSSISTDIKN (292 aa)) folds into the PKS/mFAS DH domain. His-976 serves as the catalytic Proton acceptor; for dehydratase activity. Positions 1080-1235 (NWTTIKRKEF…YSSISTDIKN (156 aa)) are C-terminal hotdog fold. The active-site Proton donor; for dehydratase activity is Asp-1146. In terms of domain architecture, Carrier spans 2482 to 2559 (DNELSIRDDI…QLIQAVIQAV (78 aa)). Ser-2519 is subject to O-(pantetheine 4'-phosphoryl)serine.

Pantetheine 4'-phosphate serves as cofactor.

Functionally, probable polyketide synthase. This chain is Probable polyketide synthase 2 (pks2), found in Dictyostelium discoideum (Social amoeba).